Here is a 727-residue protein sequence, read N- to C-terminus: Glycerol-3-phosphate dehydrogenase, mitochondrial (727 aa).

The N-terminal 42 residues, 1-42 (MAFQKAVKGTILVGGGALATVLGLSHFAHYKRKQVNLAFVEA), are a transit peptide targeting the mitochondrion. Position 71–99 (71–99 (DVLVIGGGATGSGCALDAVTRGLKTALVE)) interacts with FAD. A Phosphotyrosine modification is found at Tyr-601. EF-hand domains are found at residues 623 to 658 (SDIDRYKKRFHKFDADQKGFITIVDVQRVLESIGVQ) and 659 to 694 (MDENTLHEILNEVDLNKNGQVELNEFLQLMSAIQKG). Positions 672, 674, 676, 678, and 683 each coordinate Ca(2+).

Belongs to the FAD-dependent glycerol-3-phosphate dehydrogenase family. Requires FAD as cofactor.

Its subcellular location is the mitochondrion. It carries out the reaction a quinone + sn-glycerol 3-phosphate = dihydroxyacetone phosphate + a quinol. It functions in the pathway polyol metabolism; glycerol degradation via glycerol kinase pathway; glycerone phosphate from sn-glycerol 3-phosphate (aerobic route): step 1/1. With respect to regulation, calcium-binding enhance the activity of the enzyme. Its function is as follows. Calcium-responsive mitochondrial glycerol-3-phosphate dehydrogenase which seems to be a key component of the pancreatic beta-cell glucose-sensing device. This Bos taurus (Bovine) protein is Glycerol-3-phosphate dehydrogenase, mitochondrial (GPD2).